Here is a 243-residue protein sequence, read N- to C-terminus: LexA repressor 2 (243 aa).

The segment at residues 48 to 68 (IREIGDAVGLTSTSSVAHQLR) is a DNA-binding region (H-T-H motif). Residues Ser-167 and Lys-204 each act as for autocatalytic cleavage activity in the active site.

This sequence belongs to the peptidase S24 family. As to quaternary structure, homodimer.

The catalysed reaction is Hydrolysis of Ala-|-Gly bond in repressor LexA.. In terms of biological role, represses a number of genes involved in the response to DNA damage (SOS response), including recA and lexA. In the presence of single-stranded DNA, RecA interacts with LexA causing an autocatalytic cleavage which disrupts the DNA-binding part of LexA, leading to derepression of the SOS regulon and eventually DNA repair. The sequence is that of LexA repressor 2 from Nocardia farcinica (strain IFM 10152).